The chain runs to 132 residues: Acyl-CoA thioester hydrolase YciA (132 aa).

The HotDog ACOT-type domain occupies Pro8–Glu123.

Belongs to the acyl coenzyme A hydrolase family.

In terms of biological role, catalyzes the hydrolysis of the thioester bond in palmitoyl-CoA and malonyl-CoA. The chain is Acyl-CoA thioester hydrolase YciA (yciA) from Escherichia coli O6:H1 (strain CFT073 / ATCC 700928 / UPEC).